The sequence spans 88 residues: Elongation factor 1-beta (88 aa).

It belongs to the EF-1-beta/EF-1-delta family.

In terms of biological role, promotes the exchange of GDP for GTP in EF-1-alpha/GDP, thus allowing the regeneration of EF-1-alpha/GTP that could then be used to form the ternary complex EF-1-alpha/GTP/AAtRNA. The sequence is that of Elongation factor 1-beta (ef1b) from Thermoplasma acidophilum (strain ATCC 25905 / DSM 1728 / JCM 9062 / NBRC 15155 / AMRC-C165).